Here is a 478-residue protein sequence, read N- to C-terminus: MTLSFVTRWRDELPGTYTALSPTPLNNARLIWHNTELANTLSIPSSLFKNDAGVWGGETLLPGMSPLAQVYSGHQFGVWAGQLGDGRGILLGEQRLADGTTMDWHLKGAGLTPYSRMGDGRAVLRSTIRESLASEAMHYLGIPTTRALSIVTSDSPVYRETVEPGAMLMRVAPSHLRFGHFEHFYYRREPEKVRQLADFAIRHYWSHLEDDEDKYRLWFSDVVARTASLIAQWQTVGFAHGVMNTDNMSLLGLTLDYGPFGFLDDYEPGFICNHSDHQGRYSFDNQPAVALWNLQRLAQTLSPFVAVDALNEALDSYQQVLLTHYGQRMRQKLGFMTEQKEDNALLNELFSLMARERSDYTRTFRMLSLTEQYSAASPLRDEFIDRAAFDDWFARYRVRLQQDEVTDSERQQLMQSVNPALVLRNWLAQRAIEAAEKGDMTELHRLHEALRNPFSDRDDDYVSRPPDWGKRLEVSCSS.

G84, G86, R87, K107, D119, G120, R170, and R177 together coordinate ATP. The active-site Proton acceptor is D246. N247 and D256 together coordinate Mg(2+). D256 provides a ligand contact to ATP.

Belongs to the SELO family. It depends on Mg(2+) as a cofactor. Requires Mn(2+) as cofactor.

The catalysed reaction is L-seryl-[protein] + ATP = 3-O-(5'-adenylyl)-L-seryl-[protein] + diphosphate. It catalyses the reaction L-threonyl-[protein] + ATP = 3-O-(5'-adenylyl)-L-threonyl-[protein] + diphosphate. It carries out the reaction L-tyrosyl-[protein] + ATP = O-(5'-adenylyl)-L-tyrosyl-[protein] + diphosphate. The enzyme catalyses L-histidyl-[protein] + UTP = N(tele)-(5'-uridylyl)-L-histidyl-[protein] + diphosphate. The catalysed reaction is L-seryl-[protein] + UTP = O-(5'-uridylyl)-L-seryl-[protein] + diphosphate. It catalyses the reaction L-tyrosyl-[protein] + UTP = O-(5'-uridylyl)-L-tyrosyl-[protein] + diphosphate. Its function is as follows. Nucleotidyltransferase involved in the post-translational modification of proteins. It can catalyze the addition of adenosine monophosphate (AMP) or uridine monophosphate (UMP) to a protein, resulting in modifications known as AMPylation and UMPylation. This Escherichia coli O17:K52:H18 (strain UMN026 / ExPEC) protein is Protein nucleotidyltransferase YdiU.